The sequence spans 437 residues: tRNA-2-methylthio-N(6)-dimethylallyladenosine synthase (437 aa).

The 115-residue stretch at 1 to 115 folds into the MTTase N-terminal domain; that stretch reads MKVYIETMGC…ISQVIHKEKA (115 aa). [4Fe-4S] cluster-binding residues include Cys-10, Cys-46, Cys-78, Cys-148, Cys-152, and Cys-155. The 234-residue stretch at 134–367 folds into the Radical SAM core domain; it reads KKAQIRSLLN…QNRHKEILEE (234 aa). In terms of domain architecture, TRAM spans 370 to 436; the sequence is KLEVGKTHVV…KGRLIAAIKG (67 aa).

This sequence belongs to the methylthiotransferase family. MiaB subfamily. As to quaternary structure, monomer. The cofactor is [4Fe-4S] cluster.

Its subcellular location is the cytoplasm. It catalyses the reaction N(6)-dimethylallyladenosine(37) in tRNA + (sulfur carrier)-SH + AH2 + 2 S-adenosyl-L-methionine = 2-methylsulfanyl-N(6)-dimethylallyladenosine(37) in tRNA + (sulfur carrier)-H + 5'-deoxyadenosine + L-methionine + A + S-adenosyl-L-homocysteine + 2 H(+). Catalyzes the methylthiolation of N6-(dimethylallyl)adenosine (i(6)A), leading to the formation of 2-methylthio-N6-(dimethylallyl)adenosine (ms(2)i(6)A) at position 37 in tRNAs that read codons beginning with uridine. This is tRNA-2-methylthio-N(6)-dimethylallyladenosine synthase from Helicobacter pylori (strain HPAG1).